We begin with the raw amino-acid sequence, 602 residues long: Elongation factor 4 (602 aa).

One can recognise a tr-type G domain in the interval 7–189 (SKIRNFCIIA…AIVRRVPPPQ (183 aa)). GTP is bound by residues 19 to 24 (DHGKST) and 136 to 139 (NKVD).

This sequence belongs to the TRAFAC class translation factor GTPase superfamily. Classic translation factor GTPase family. LepA subfamily.

The protein resides in the cell inner membrane. It catalyses the reaction GTP + H2O = GDP + phosphate + H(+). Its function is as follows. Required for accurate and efficient protein synthesis under certain stress conditions. May act as a fidelity factor of the translation reaction, by catalyzing a one-codon backward translocation of tRNAs on improperly translocated ribosomes. Back-translocation proceeds from a post-translocation (POST) complex to a pre-translocation (PRE) complex, thus giving elongation factor G a second chance to translocate the tRNAs correctly. Binds to ribosomes in a GTP-dependent manner. This Prochlorococcus marinus (strain MIT 9301) protein is Elongation factor 4.